We begin with the raw amino-acid sequence, 137 residues long: Protein LTO1 homolog (137 aa).

Alanine 2 is subject to N-acetylalanine. The deca-GX3 motif; required for interaction with YAE1 and the CIA complex stretch occupies residues 22 to 58; that stretch reads GYQEGYEEGSSLGIVEGKRYGMVHGAKIGSEIGCYRG.

Belongs to the LTO1 family. As to quaternary structure, forms a complex with YAE1. Interacts with PYCR1 and PYCR2.

The protein resides in the nucleus. In terms of biological role, the complex LTO1:YAE1 functions as a target specific adapter that probably recruits apo-ABCE1 to the cytosolic iron-sulfur protein assembly (CIA) complex machinery. May be required for biogenesis of the large ribosomal subunit and initiation of translation. May play a role in the regulation of proline metabolism and ROS production. The sequence is that of Protein LTO1 homolog from Mus musculus (Mouse).